Here is a 684-residue protein sequence, read N- to C-terminus: MSASGVLSFTQQGWEQVLAKVKRAVVYLDAACAESLHWGCGSTRLLEAVGGPDCHLREFEPDAIGGGAKQPKAVFVLSCLLKGRTVEILRDIICRSHFQYCVVVTTVSHAVHLTANHVPAAAAAEMEGQQPVFEQLEEKLCEWMGNMNYTAEVFHVPLLLAPVAPHFALTPAFASLFPLLPQDVHLLNSARPDKRKLGSLGDVDSTTLTPELLLQIRCLVSGLSSLCEHLGVREECFAVGSLSQVIAADLANYAPAKNRKKTAAGRASVVFVDRTLDLTGAVGHHGDNLVEKIISALPQLPGHTNDVMVNMIALTALHTEEENYNVVAPGCLSQSSDTTAKALWEALLNTKHKEAVMEVRRHLVEAASRENLPIKMSMGRVTPGQLMSYIQLFKNNLKALMNHCGLLQLGLATAQTLKHPQTAKWDNFLAFERLLLQSIGESAMSVVLNQLLPMIKPVTQRTNEDYSPEELLILLIYIYSVTGELTVDKDLCEAEEKVKKALAQVFCEESGLSPLLQKITDWDSSINLTFHKSKIAVDELFTSLRDIAGARSLLKQFKSVYVPGNHTHQASYKPLLKQVVEEIFHPERPDSVDIEHMSSGLTDLLKTGFSMFMKVSRPHPSDYPLLILFVVGGVTVSEVKMVKDLVASLKPGTQVIVLSTRLLKPLNIPELLFATDRLHPDLGF.

It belongs to the STXBP/unc-18/SEC1 family.

In terms of biological role, may be involved in protein transport. The polypeptide is Sec1 family domain-containing protein 2 (SCFD2) (Homo sapiens (Human)).